A 340-amino-acid polypeptide reads, in one-letter code: Solute-binding protein Dde_0634 (340 aa).

The first 29 residues, 1 to 29, serve as a signal peptide directing secretion; it reads MKSTFAALLIMVGCLVSGALLTGSEAAAA. (indol-3-yl)acetate-binding positions include Tyr99, Arg172, 210–213, and Tyr235; that span reads TSLD.

It belongs to the bacterial solute-binding protein 7 family. In terms of assembly, the complex is comprised of an extracytoplasmic solute-binding protein and a heteromeric permease formed by two transmembrane proteins.

The protein localises to the periplasm. In terms of biological role, solute-binding protein that binds indole-3-pyruvate and indole-3-acetate (in vitro). Can also bind D-tryptophan (in vitro), but that is probably not a physiological ligand. Probably part of a tripartite ATP-independent periplasmic (TRAP) transport system that mediates solute transport into the cytoplasm. The chain is Solute-binding protein Dde_0634 from Oleidesulfovibrio alaskensis (strain ATCC BAA-1058 / DSM 17464 / G20) (Desulfovibrio alaskensis).